The chain runs to 382 residues: S-adenosylmethionine synthase (382 aa).

His-16 is an ATP binding site. Asp-18 contacts Mg(2+). Glu-44 is a binding site for K(+). Positions 57 and 100 each coordinate L-methionine. Residues 100-110 (QSADIAMGVDE) form a flexible loop region. ATP is bound by residues 165–167 (DAK), Asp-240, 246–247 (RK), Ala-263, and Lys-267. Residue Asp-240 coordinates L-methionine. Residue Lys-271 participates in L-methionine binding.

This sequence belongs to the AdoMet synthase family. As to quaternary structure, homotetramer; dimer of dimers. The cofactor is Mg(2+). It depends on K(+) as a cofactor.

It localises to the cytoplasm. It carries out the reaction L-methionine + ATP + H2O = S-adenosyl-L-methionine + phosphate + diphosphate. The protein operates within amino-acid biosynthesis; S-adenosyl-L-methionine biosynthesis; S-adenosyl-L-methionine from L-methionine: step 1/1. Functionally, catalyzes the formation of S-adenosylmethionine (AdoMet) from methionine and ATP. The overall synthetic reaction is composed of two sequential steps, AdoMet formation and the subsequent tripolyphosphate hydrolysis which occurs prior to release of AdoMet from the enzyme. The sequence is that of S-adenosylmethionine synthase from Saccharophagus degradans (strain 2-40 / ATCC 43961 / DSM 17024).